Consider the following 109-residue polypeptide: Mannose-specific lectin (109 aa).

The region spanning 1–109 is the Bulb-type lectin domain; it reads DNILYSSEVL…PPIWATGTGR (109 aa). A disulfide bond links Cys-29 and Cys-52. The propeptide occupies 79 to 82; it reads TGTN.

Homotrimer or homotetramer.

It localises to the secreted. Functionally, mannose-specific lectin. Shows agglutinating activity toward rabbit erythrocytes and mitogenic activity towards mouse lymphocytes. The polypeptide is Mannose-specific lectin (Aloe arborescens (Kidachi aloe)).